A 196-amino-acid chain; its full sequence is ATP-dependent Clp protease proteolytic subunit (196 aa).

Serine 96 acts as the Nucleophile in catalysis. Histidine 121 is an active-site residue.

It belongs to the peptidase S14 family. In terms of assembly, fourteen ClpP subunits assemble into 2 heptameric rings which stack back to back to give a disk-like structure with a central cavity, resembling the structure of eukaryotic proteasomes.

The protein resides in the cytoplasm. The catalysed reaction is Hydrolysis of proteins to small peptides in the presence of ATP and magnesium. alpha-casein is the usual test substrate. In the absence of ATP, only oligopeptides shorter than five residues are hydrolyzed (such as succinyl-Leu-Tyr-|-NHMec, and Leu-Tyr-Leu-|-Tyr-Trp, in which cleavage of the -Tyr-|-Leu- and -Tyr-|-Trp bonds also occurs).. In terms of biological role, cleaves peptides in various proteins in a process that requires ATP hydrolysis. Has a chymotrypsin-like activity. Plays a major role in the degradation of misfolded proteins. The polypeptide is ATP-dependent Clp protease proteolytic subunit (Streptococcus suis (strain 98HAH33)).